Consider the following 180-residue polypeptide: GTP cyclohydrolase 1 (180 aa).

Residues C71, H74, and C142 each contribute to the Zn(2+) site.

It belongs to the GTP cyclohydrolase I family. Homomer.

The catalysed reaction is GTP + H2O = 7,8-dihydroneopterin 3'-triphosphate + formate + H(+). The protein operates within cofactor biosynthesis; 7,8-dihydroneopterin triphosphate biosynthesis; 7,8-dihydroneopterin triphosphate from GTP: step 1/1. The protein is GTP cyclohydrolase 1 of Helicobacter pylori (strain P12).